A 153-amino-acid polypeptide reads, in one-letter code: SKP1-like protein 5 (153 aa).

An interaction with the F-box domain of F-box proteins region spans residues 90–153 (MMAANYLNIQ…IREENQWAFQ (64 aa)).

It belongs to the SKP1 family. As to quaternary structure, part of a SCF (SKP1-cullin-F-box) protein ligase complex. Interacts with PP2A13. As to expression, restricted to inflorescences, especially in the inflorescence meristem (IM).

The protein localises to the nucleus. Its pathway is protein modification; protein ubiquitination. In terms of biological role, involved in ubiquitination and subsequent proteasomal degradation of target proteins. Together with CUL1, RBX1 and a F-box protein, it forms a SCF E3 ubiquitin ligase complex. The functional specificity of this complex depends on the type of F-box protein. In the SCF complex, it serves as an adapter that links the F-box protein to CUL1. This chain is SKP1-like protein 5 (ASK5), found in Arabidopsis thaliana (Mouse-ear cress).